The chain runs to 539 residues: Sodium/hydrogen exchanger 9B2 (539 aa).

Residues 1–94 (MEDSLFSVDK…ACPPQGCFSL (94 aa)) lie on the Cytoplasmic side of the membrane. A helical transmembrane segment spans residues 95-112 (AITNVTMVILIWAVVWSI). The Extracellular segment spans residues 113–121 (TGPECLPGG). The helical transmembrane segment at 122–141 (NLFGILALLFSAALGGKLIS) threads the bilayer. Over 142–152 (LIKIPSLPPLP) the chain is Cytoplasmic. A helical transmembrane segment spans residues 153-169 (PLLGMLLAGFLIRNIPV). Residues 170 to 179 (ITDQVQIHHK) are Extracellular-facing. A helical membrane pass occupies residues 180–197 (WSAALRNIALAIILVRAG). At 198 to 208 (LGLDPKALRKL) the chain is on the cytoplasmic side. Residues 209–235 (KAVCLRLSFGPCVVESCTAAVVSHFIM) form a helical membrane-spanning segment. At 236–241 (GFPLTW) the chain is on the extracellular side. The helical transmembrane segment at 242-250 (GFMLGFVLG) threads the bilayer. At 251 to 278 (AVSPAVVVPSMLILQKEGFGVDKGIPTL) the chain is on the cytoplasmic side. Na(+) contacts are provided by Val252, Gly283, Asp286, and Asp287. Residues 279-298 (LMAAGSFDDVLAITGFNTCL) form a helical membrane-spanning segment. Residues 299–308 (GMAFSSGSTL) lie on the Extracellular side of the membrane. Residues 309 to 332 (NTIVRGVLEVVVGIAAGLLFGFFL) form a helical membrane-spanning segment. Topologically, residues 333 to 347 (HYFPSKDQENLKGKR) are cytoplasmic. The chain crosses the membrane as a helical span at residues 348–365 (SYLILALSVFAVFGSLYF). Residues 366–369 (GFPG) lie on the Extracellular side of the membrane. A helical transmembrane segment spans residues 370-381 (SGGLCTLVMAFL). The Cytoplasmic segment spans residues 382–398 (AGIGWSTDKTVVEDIIA). Residues 399–419 (VSWDIFQPLLFGLIGAEISVA) form a helical membrane-spanning segment. Topologically, residues 420–425 (SLKPET) are extracellular. A helical membrane pass occupies residues 426 to 448 (VGLCTATLIIALIIRICISFLMV). Residues 449-469 (CFSGFSLKEKIFISLAWMPKA) are Cytoplasmic-facing. Residues 470–481 (TVQAAIGSVALD) form a helical membrane-spanning segment. The Extracellular portion of the chain corresponds to 482 to 494 (TARTLENKQFEDY). A helical transmembrane segment spans residues 495 to 517 (GMDVLTVAFLGILVTAPIGALVI). At 518–539 (GLTGPKMLEKSESRTVTEEGSV) the chain is on the cytoplasmic side.

The protein belongs to the monovalent cation:proton antiporter 1 (CPA1) transporter (TC 2.A.36) family. In terms of assembly, homodimer; dimerization is essential for SLC9B2 activity. Lipids seem to play a role in the stabilization of the dimerization subdomain.

The protein resides in the cell membrane. It localises to the mitochondrion membrane. It is found in the endosome membrane. Its subcellular location is the recycling endosome membrane. The protein localises to the cytoplasmic vesicle. The protein resides in the secretory vesicle. It localises to the synaptic vesicle membrane. It is found in the basolateral cell membrane. Its subcellular location is the apical cell membrane. The catalysed reaction is Li(+)(out) + H(+)(in) = Li(+)(in) + H(+)(out). The enzyme catalyses Li(+)(in) + Na(+)(out) = Li(+)(out) + Na(+)(in). It catalyses the reaction Na(+)(in) + H(+)(out) = Na(+)(out) + H(+)(in). Allosterically inhibited by the N-terminal domain. Inhibited by phloretin. Functionally, electroneutral Na(+) Li(+)/H(+) antiporter that extrudes Na(+) or Li(+) in exchange for external protons across the membrane. Uses the proton gradient/membrane potential to extrude sodium. Contributes to the regulation of intracellular pH and sodium homeostasis. Also able to mediate Na(+)/Li(+) antiporter activity in kidney. This chain is Sodium/hydrogen exchanger 9B2 (slc9b2), found in Xenopus tropicalis (Western clawed frog).